The primary structure comprises 494 residues: Zinc metalloproteinase/disintegrin (494 aa).

A signal peptide spans 1–20 (MIQVLLVTICLAVFPFQGSS). Residues 21 to 193 (KTLKSGNVND…KKASHLVATS (173 aa)) constitute a propeptide that is removed on maturation. Positions 201-396 (RYVQLVIVAD…HNPPCILNQA (196 aa)) constitute a Peptidase M12B domain. 3 cysteine pairs are disulfide-bonded: Cys-311–Cys-391, Cys-351–Cys-375, and Cys-353–Cys-358. Residue His-336 participates in Zn(2+) binding. Glu-337 is an active-site residue. Zn(2+) is bound by residues His-340 and His-346. The propeptide occupies 410–431 (ELLQNSVNPCYDPVTCQPKEKE). The region spanning 417 to 478 (NPCYDPVTCQ…DCPRNPYKGE (62 aa)) is the Disintegrin domain. Intrachain disulfides connect Cys-433/Cys-442, Cys-438/Cys-463, Cys-439/Cys-468, and Cys-451/Cys-470. The Cell attachment site motif lies at 455–457 (RGD). A propeptide spanning residues 482-494 (MEWPAPAKGSVLM) is cleaved from the precursor.

The protein belongs to the venom metalloproteinase (M12B) family. P-II subfamily. P-IIa sub-subfamily. In terms of assembly, monomer (disintegrin). In terms of tissue distribution, expressed by the venom gland.

The protein resides in the secreted. Functionally, impairs hemostasis in the envenomed animal. Inhibits ADP-induced platelet aggregation (IC(50)=168 nM). Inhibits alpha-5/beta-1 (ITGA5/ITGB1) integrin and induces the expression of a ligand-induced binding site epitope on beta-1 integrin subunit. Has a direct chemotactic stimulus on human neutrophils in vitro. This chain is Zinc metalloproteinase/disintegrin, found in Echis ocellatus (Ocellated saw-scaled viper).